The primary structure comprises 533 residues: 2,3-bisphosphoglycerate-independent phosphoglycerate mutase (533 aa).

Residues D15 and S65 each coordinate Mn(2+). S65 acts as the Phosphoserine intermediate in catalysis. Substrate is bound by residues H126, 156–157 (RD), R188, R194, 258–261 (RPDR), and K331. Mn(2+)-binding residues include D398, H402, D439, H440, and H457.

Belongs to the BPG-independent phosphoglycerate mutase family. As to quaternary structure, monomer. Mn(2+) is required as a cofactor.

It carries out the reaction (2R)-2-phosphoglycerate = (2R)-3-phosphoglycerate. It participates in carbohydrate degradation; glycolysis; pyruvate from D-glyceraldehyde 3-phosphate: step 3/5. Catalyzes the interconversion of 2-phosphoglycerate and 3-phosphoglycerate. In Trichormus variabilis (strain ATCC 29413 / PCC 7937) (Anabaena variabilis), this protein is 2,3-bisphosphoglycerate-independent phosphoglycerate mutase.